The sequence spans 247 residues: ATP synthase subunit a, chloroplastic (247 aa).

5 consecutive transmembrane segments (helical) span residues 38-58 (QVLI…IVTV), 95-115 (VPFI…GALL), 134-154 (INTT…AGLS), 199-219 (LVVV…VMFL), and 220-240 (GLFT…AYIG).

Belongs to the ATPase A chain family. F-type ATPases have 2 components, CF(1) - the catalytic core - and CF(0) - the membrane proton channel. CF(1) has five subunits: alpha(3), beta(3), gamma(1), delta(1), epsilon(1). CF(0) has four main subunits: a, b, b' and c.

Its subcellular location is the plastid. It is found in the chloroplast thylakoid membrane. In terms of biological role, key component of the proton channel; it plays a direct role in the translocation of protons across the membrane. This is ATP synthase subunit a, chloroplastic from Populus trichocarpa (Western balsam poplar).